We begin with the raw amino-acid sequence, 245 residues long: 1-(5-phosphoribosyl)-5-[(5-phosphoribosylamino)methylideneamino] imidazole-4-carboxamide isomerase (245 aa).

Catalysis depends on Asp-10, which acts as the Proton acceptor. Asp-135 acts as the Proton donor in catalysis.

It belongs to the HisA/HisF family.

The protein localises to the cytoplasm. The enzyme catalyses 1-(5-phospho-beta-D-ribosyl)-5-[(5-phospho-beta-D-ribosylamino)methylideneamino]imidazole-4-carboxamide = 5-[(5-phospho-1-deoxy-D-ribulos-1-ylimino)methylamino]-1-(5-phospho-beta-D-ribosyl)imidazole-4-carboxamide. The protein operates within amino-acid biosynthesis; L-histidine biosynthesis; L-histidine from 5-phospho-alpha-D-ribose 1-diphosphate: step 4/9. This is 1-(5-phosphoribosyl)-5-[(5-phosphoribosylamino)methylideneamino] imidazole-4-carboxamide isomerase from Methanosarcina acetivorans (strain ATCC 35395 / DSM 2834 / JCM 12185 / C2A).